Consider the following 705-residue polypeptide: Phosphoribosylformylglycinamidine synthase subunit PurL (705 aa).

Residue histidine 32 is part of the active site. Tyrosine 35 is a binding site for ATP. Residue glutamate 76 participates in Mg(2+) binding. Substrate-binding positions include 77-80 (SHNH) and arginine 99. Histidine 78 serves as the catalytic Proton acceptor. Residue aspartate 100 coordinates Mg(2+). Glutamine 224 contacts substrate. Position 252 (aspartate 252) interacts with Mg(2+). Substrate is bound at residue 296 to 298 (ESQ). The ATP site is built by aspartate 471 and glycine 508. Position 509 (asparagine 509) interacts with Mg(2+). Residue serine 511 participates in substrate binding.

It belongs to the FGAMS family. Monomer. Part of the FGAM synthase complex composed of 1 PurL, 1 PurQ and 2 PurS subunits.

It is found in the cytoplasm. It catalyses the reaction N(2)-formyl-N(1)-(5-phospho-beta-D-ribosyl)glycinamide + L-glutamine + ATP + H2O = 2-formamido-N(1)-(5-O-phospho-beta-D-ribosyl)acetamidine + L-glutamate + ADP + phosphate + H(+). It functions in the pathway purine metabolism; IMP biosynthesis via de novo pathway; 5-amino-1-(5-phospho-D-ribosyl)imidazole from N(2)-formyl-N(1)-(5-phospho-D-ribosyl)glycinamide: step 1/2. In terms of biological role, part of the phosphoribosylformylglycinamidine synthase complex involved in the purines biosynthetic pathway. Catalyzes the ATP-dependent conversion of formylglycinamide ribonucleotide (FGAR) and glutamine to yield formylglycinamidine ribonucleotide (FGAM) and glutamate. The FGAM synthase complex is composed of three subunits. PurQ produces an ammonia molecule by converting glutamine to glutamate. PurL transfers the ammonia molecule to FGAR to form FGAM in an ATP-dependent manner. PurS interacts with PurQ and PurL and is thought to assist in the transfer of the ammonia molecule from PurQ to PurL. In Pyrococcus abyssi (strain GE5 / Orsay), this protein is Phosphoribosylformylglycinamidine synthase subunit PurL.